Reading from the N-terminus, the 313-residue chain is Aspartate carbamoyltransferase catalytic subunit (313 aa).

Residues arginine 59 and threonine 60 each contribute to the carbamoyl phosphate site. Residue lysine 87 coordinates L-aspartate. Residues arginine 109, histidine 137, and glutamine 140 each contribute to the carbamoyl phosphate site. Residues arginine 170 and arginine 224 each coordinate L-aspartate. Residues glycine 265 and proline 266 each coordinate carbamoyl phosphate.

It belongs to the aspartate/ornithine carbamoyltransferase superfamily. ATCase family. In terms of assembly, heterododecamer (2C3:3R2) of six catalytic PyrB chains organized as two trimers (C3), and six regulatory PyrI chains organized as three dimers (R2).

The enzyme catalyses carbamoyl phosphate + L-aspartate = N-carbamoyl-L-aspartate + phosphate + H(+). Its pathway is pyrimidine metabolism; UMP biosynthesis via de novo pathway; (S)-dihydroorotate from bicarbonate: step 2/3. In terms of biological role, catalyzes the condensation of carbamoyl phosphate and aspartate to form carbamoyl aspartate and inorganic phosphate, the committed step in the de novo pyrimidine nucleotide biosynthesis pathway. This is Aspartate carbamoyltransferase catalytic subunit from Sinorhizobium medicae (strain WSM419) (Ensifer medicae).